The chain runs to 331 residues: MLIKKTLRAALAGDDIPRSEITPRAVFEHRRRILQAAGAAAAGGLVGAHGLALAAYASPDATARKLAAPANPKFVVPEKVTSFKDITTYNNFYEFGTDKSDPARRAGTLRPHPWRVSVEGEVRNPKVYDIDALLKLAPLEERVYRLRCVEGWSMVIPWIGFPLAELIKRVEPTANAKYVQFVTLADPSQMPGLSAPILDWPYSEGLRMDEAMNPLTLLTIGVYGQVLPNQNGAPVRVIVPWKYGFKSAKSIVKIRFVDRQPPTSWNTYAPNEYGFYSNVNPNVDHPRWSQATERRIGEDGFFTPKRKTLMFNGYGDWVASMYRGMDLKKYF.

The segment at residues 1–57 (MLIKKTLRAALAGDDIPRSEITPRAVFEHRRRILQAAGAAAAGGLVGAHGLALAAYA) is a signal peptide (tat-type signal). Mo-molybdopterin contacts are provided by residues Asn-90, 93–94 (YE), Cys-148, Thr-183, Asn-231, Arg-236, and 247–249 (SAK).

This sequence belongs to the MsrP family. As to quaternary structure, heterodimer of a catalytic subunit (MsrP) and a heme-binding subunit (MsrQ). Mo-molybdopterin is required as a cofactor. In terms of processing, predicted to be exported by the Tat system. The position of the signal peptide cleavage has not been experimentally proven.

The protein resides in the periplasm. It catalyses the reaction L-methionyl-[protein] + a quinone + H2O = L-methionyl-(S)-S-oxide-[protein] + a quinol. The catalysed reaction is L-methionyl-[protein] + a quinone + H2O = L-methionyl-(R)-S-oxide-[protein] + a quinol. Functionally, part of the MsrPQ system that repairs oxidized periplasmic proteins containing methionine sulfoxide residues (Met-O), using respiratory chain electrons. Thus protects these proteins from oxidative-stress damage caused by reactive species of oxygen and chlorine generated by the host defense mechanisms. MsrPQ is essential for the maintenance of envelope integrity under bleach stress, rescuing a wide series of structurally unrelated periplasmic proteins from methionine oxidation. The catalytic subunit MsrP is non-stereospecific, being able to reduce both (R-) and (S-) diastereoisomers of methionine sulfoxide. The sequence is that of Protein-methionine-sulfoxide reductase catalytic subunit MsrP from Burkholderia mallei (strain ATCC 23344).